The sequence spans 138 residues: Aspartate 1-decarboxylase (138 aa).

The active-site Schiff-base intermediate with substrate; via pyruvic acid is Ser25. Ser25 bears the Pyruvic acid (Ser) mark. Residue Thr57 coordinates substrate. Tyr58 serves as the catalytic Proton donor. Residue Gly73–Ala75 coordinates substrate. Residues Val117 to Val138 are disordered.

It belongs to the PanD family. In terms of assembly, heterooctamer of four alpha and four beta subunits. Requires pyruvate as cofactor. Post-translationally, is synthesized initially as an inactive proenzyme, which is activated by self-cleavage at a specific serine bond to produce a beta-subunit with a hydroxyl group at its C-terminus and an alpha-subunit with a pyruvoyl group at its N-terminus.

Its subcellular location is the cytoplasm. It carries out the reaction L-aspartate + H(+) = beta-alanine + CO2. Its pathway is cofactor biosynthesis; (R)-pantothenate biosynthesis; beta-alanine from L-aspartate: step 1/1. In terms of biological role, catalyzes the pyruvoyl-dependent decarboxylation of aspartate to produce beta-alanine. The sequence is that of Aspartate 1-decarboxylase from Clavibacter michiganensis subsp. michiganensis (strain NCPPB 382).